We begin with the raw amino-acid sequence, 429 residues long: UDP-glucuronate 4-epimerase 1 (429 aa).

The next 2 membrane-spanning stretches (helical) occupy residues 36-56 (FLWA…QSFV) and 87-107 (GISV…SLAL). NAD(+) is bound at residue 89-120 (SVLVTGATGFVGSHVSLALRKRGDGVVGLDNF). The Proton acceptor role is filled by Tyr239.

This sequence belongs to the NAD(P)-dependent epimerase/dehydratase family. As to quaternary structure, homodimer. In root stele, leaves, siliques, flowers, pollen and stems.

Its subcellular location is the golgi apparatus. The protein localises to the golgi stack membrane. The catalysed reaction is UDP-alpha-D-glucuronate = UDP-alpha-D-galacturonate. With respect to regulation, inhibited by UDP-Xylose. In terms of biological role, UDP-D-glucuronate 4-epimerase involved in the synthesis of the negatively charged monosaccharide that forms the backbone of pectic cell wall components. This chain is UDP-glucuronate 4-epimerase 1 (GAE1), found in Arabidopsis thaliana (Mouse-ear cress).